The following is a 707-amino-acid chain: Polyribonucleotide nucleotidyltransferase (707 aa).

The Mg(2+) site is built by Asp-487 and Asp-493. A KH domain is found at 554–613 (PKILTMNINPDKIRDVIGPSGKQINKIIEDTGVKIDIEQDGTIFISSTDESSNQKAKKII). Positions 623–691 (GQLYLGKVKR…KQGRVNLSRK (69 aa)) constitute an S1 motif domain.

This sequence belongs to the polyribonucleotide nucleotidyltransferase family. Requires Mg(2+) as cofactor.

It is found in the cytoplasm. It carries out the reaction RNA(n+1) + phosphate = RNA(n) + a ribonucleoside 5'-diphosphate. Functionally, involved in mRNA degradation. Catalyzes the phosphorolysis of single-stranded polyribonucleotides processively in the 3'- to 5'-direction. The polypeptide is Polyribonucleotide nucleotidyltransferase (Bacillus velezensis (strain DSM 23117 / BGSC 10A6 / LMG 26770 / FZB42) (Bacillus amyloliquefaciens subsp. plantarum)).